Reading from the N-terminus, the 239-residue chain is Fatty acid metabolism regulator protein (239 aa).

The HTH gntR-type domain occupies 6–74; it reads QSPAGFAEEY…HGKPTKVNNF (69 aa). Positions 34–53 form a DNA-binding region, H-T-H motif; that stretch reads ERELSELIGVTRTTLREVLQ.

Homodimer.

The protein resides in the cytoplasm. In terms of biological role, multifunctional regulator of fatty acid metabolism. Represses transcription of at least eight genes required for fatty acid transport and beta-oxidation including fadA, fadB, fadD, fadL and fadE. Activates transcription of at least three genes required for unsaturated fatty acid biosynthesis: fabA, fabB and iclR, the gene encoding the transcriptional regulator of the aceBAK operon encoding the glyoxylate shunt enzymes. Binding of FadR is specifically inhibited by long chain fatty acyl-CoA compounds. The polypeptide is Fatty acid metabolism regulator protein (Salmonella typhi).